The chain runs to 144 residues: Large ribosomal subunit protein uL15 (144 aa).

The disordered stretch occupies residues 1 to 52 (MRLNSLSPAEGAKHSAKRLGRGIGSGLGKTGGRGHKGQKSRTGGGVRRGFEG). The span at 21-31 (RGIGSGLGKTG) shows a compositional bias: gly residues.

It belongs to the universal ribosomal protein uL15 family. Part of the 50S ribosomal subunit.

Binds to the 23S rRNA. The polypeptide is Large ribosomal subunit protein uL15 (Actinobacillus pleuropneumoniae serotype 5b (strain L20)).